The following is a 171-amino-acid chain: Large ribosomal subunit protein uL10 (171 aa).

It belongs to the universal ribosomal protein uL10 family. As to quaternary structure, part of the ribosomal stalk of the 50S ribosomal subunit. The N-terminus interacts with L11 and the large rRNA to form the base of the stalk. The C-terminus forms an elongated spine to which L12 dimers bind in a sequential fashion forming a multimeric L10(L12)X complex.

Its function is as follows. Forms part of the ribosomal stalk, playing a central role in the interaction of the ribosome with GTP-bound translation factors. In Methylocella silvestris (strain DSM 15510 / CIP 108128 / LMG 27833 / NCIMB 13906 / BL2), this protein is Large ribosomal subunit protein uL10.